The chain runs to 308 residues: Energy-coupling factor transporter ATP-binding protein EcfA2 (308 aa).

The ABC transporter domain maps to 3–263 (IEVKNISKVF…VDFLRENEME (261 aa)). 40-47 (GPTGSGKT) serves as a coordination point for ATP.

Belongs to the ABC transporter superfamily. Energy-coupling factor EcfA family. In terms of assembly, forms a stable energy-coupling factor (ECF) transporter complex composed of 2 membrane-embedded substrate-binding proteins (S component), 2 ATP-binding proteins (A component) and 2 transmembrane proteins (T component).

The protein resides in the cell membrane. In terms of biological role, ATP-binding (A) component of a common energy-coupling factor (ECF) ABC-transporter complex. Unlike classic ABC transporters this ECF transporter provides the energy necessary to transport a number of different substrates. The polypeptide is Energy-coupling factor transporter ATP-binding protein EcfA2 (Mycoplasma mobile (strain ATCC 43663 / 163K / NCTC 11711) (Mesomycoplasma mobile)).